Consider the following 81-residue polypeptide: Short neurotoxin B (81 aa).

A signal peptide spans 1–21 (MKTLLLTLVVVTIVCLDLGYT). 4 disulfides stabilise this stretch: Cys24-Cys43, Cys38-Cys60, Cys62-Cys73, and Cys74-Cys79.

Belongs to the three-finger toxin family. Short-chain subfamily. Type I alpha-neurotoxin sub-subfamily. Expressed by the venom gland.

It is found in the secreted. Binds to muscle nicotinic acetylcholine receptor (nAChR) and inhibit acetylcholine from binding to the receptor, thereby impairing neuromuscular transmission. The chain is Short neurotoxin B from Aipysurus laevis (Olive sea snake).